Reading from the N-terminus, the 296-residue chain is Porphobilinogen deaminase (296 aa).

Cysteine 232 carries the S-(dipyrrolylmethanemethyl)cysteine modification.

The protein belongs to the HMBS family. As to quaternary structure, monomer. Dipyrromethane serves as cofactor.

It carries out the reaction 4 porphobilinogen + H2O = hydroxymethylbilane + 4 NH4(+). It participates in porphyrin-containing compound metabolism; protoporphyrin-IX biosynthesis; coproporphyrinogen-III from 5-aminolevulinate: step 2/4. Tetrapolymerization of the monopyrrole PBG into the hydroxymethylbilane pre-uroporphyrinogen in several discrete steps. In Corynebacterium aurimucosum (strain ATCC 700975 / DSM 44827 / CIP 107346 / CN-1) (Corynebacterium nigricans), this protein is Porphobilinogen deaminase.